The following is a 799-amino-acid chain: DNA ligase (799 aa).

Basic and acidic residues predominate over residues 1-11 (MTEVKTGRVVD). A disordered region spans residues 1-35 (MTEVKTGRVVDDAPVNDAPENNAAEATSPARHDAI). NAD(+) is bound by residues 67 to 71 (DAEYD), 116 to 117 (SL), and Asp-147. Lys-149 serves as the catalytic N6-AMP-lysine intermediate. NAD(+)-binding residues include Arg-170, Glu-207, Lys-327, and Lys-351. Cys-445, Cys-448, Cys-463, and Cys-468 together coordinate Zn(2+). A BRCT domain is found at 634-723 (AIVLPLQGLK…VASVDASEAV (90 aa)). The segment at 720–799 (SEAVAEETPP…RGRAEQLKLF (80 aa)) is disordered. Positions 755–767 (GSASGDDSRGAAA) are enriched in low complexity. Positions 787-799 (DVPRGRAEQLKLF) are enriched in basic and acidic residues.

This sequence belongs to the NAD-dependent DNA ligase family. LigA subfamily. It depends on Mg(2+) as a cofactor. The cofactor is Mn(2+).

It catalyses the reaction NAD(+) + (deoxyribonucleotide)n-3'-hydroxyl + 5'-phospho-(deoxyribonucleotide)m = (deoxyribonucleotide)n+m + AMP + beta-nicotinamide D-nucleotide.. Its function is as follows. DNA ligase that catalyzes the formation of phosphodiester linkages between 5'-phosphoryl and 3'-hydroxyl groups in double-stranded DNA using NAD as a coenzyme and as the energy source for the reaction. It is essential for DNA replication and repair of damaged DNA. The sequence is that of DNA ligase from Nitratidesulfovibrio vulgaris (strain ATCC 29579 / DSM 644 / CCUG 34227 / NCIMB 8303 / VKM B-1760 / Hildenborough) (Desulfovibrio vulgaris).